Reading from the N-terminus, the 117-residue chain is Ribulose bisphosphate carboxylase small subunit 1 (117 aa).

This sequence belongs to the RuBisCO small chain family. Heterohexadecamer of 8 large and 8 small subunits.

In terms of biological role, ruBisCO catalyzes two reactions: the carboxylation of D-ribulose 1,5-bisphosphate, the primary event in carbon dioxide fixation, as well as the oxidative fragmentation of the pentose substrate. Both reactions occur simultaneously and in competition at the same active site. Although the small subunit is not catalytic it is essential for maximal activity. The sequence is that of Ribulose bisphosphate carboxylase small subunit 1 from Hydrogenovibrio marinus.